The following is a 114-amino-acid chain: Cell cycle protein GpsB (114 aa).

The stretch at 42-77 (YQKMADMNNEVVKLSEENHKLKKELEELRLRVATSR) forms a coiled coil. The disordered stretch occupies residues 74-99 (ATSRPQDNKSFSSNNTTTNTSSNNVD). The segment covering 85 to 97 (SSNNTTTNTSSNN) has biased composition (low complexity).

The protein belongs to the GpsB family. Forms polymers through the coiled coil domains. Interacts with PBP1, MreC and EzrA.

Its subcellular location is the cytoplasm. Divisome component that associates with the complex late in its assembly, after the Z-ring is formed, and is dependent on DivIC and PBP2B for its recruitment to the divisome. Together with EzrA, is a key component of the system that regulates PBP1 localization during cell cycle progression. Its main role could be the removal of PBP1 from the cell pole after pole maturation is completed. Also contributes to the recruitment of PBP1 to the division complex. Not essential for septum formation. The polypeptide is Cell cycle protein GpsB (Staphylococcus aureus (strain Mu3 / ATCC 700698)).